The sequence spans 375 residues: Chaperone protein DnaJ (375 aa).

Residues 5–70 form the J domain; the sequence is DFYEVLGVER…SKRAAYDQYG (66 aa). A CR-type zinc finger spans residues 134 to 212; the sequence is GTTVSIRVPT…CHGEGRVEEY (79 aa). Positions 147, 150, 164, 167, 186, 189, 200, and 203 each coordinate Zn(2+). CXXCXGXG motif repeat units follow at residues 147 to 154, 164 to 171, 186 to 193, and 200 to 207; these read CKPCDGSG, CPTCGGIG, CPRCHGQG, and CNSCHGEG.

It belongs to the DnaJ family. As to quaternary structure, homodimer. Zn(2+) is required as a cofactor.

It localises to the cytoplasm. In terms of biological role, participates actively in the response to hyperosmotic and heat shock by preventing the aggregation of stress-denatured proteins and by disaggregating proteins, also in an autonomous, DnaK-independent fashion. Unfolded proteins bind initially to DnaJ; upon interaction with the DnaJ-bound protein, DnaK hydrolyzes its bound ATP, resulting in the formation of a stable complex. GrpE releases ADP from DnaK; ATP binding to DnaK triggers the release of the substrate protein, thus completing the reaction cycle. Several rounds of ATP-dependent interactions between DnaJ, DnaK and GrpE are required for fully efficient folding. Also involved, together with DnaK and GrpE, in the DNA replication of plasmids through activation of initiation proteins. This Pseudomonas entomophila (strain L48) protein is Chaperone protein DnaJ.